We begin with the raw amino-acid sequence, 368 residues long: COP9 signalosome complex subunit 5 (368 aa).

An MPN domain is found at 56–193; sequence IKISAIALLK…IGAFRTYPEG (138 aa). Positions 139, 141, and 152 each coordinate Zn(2+). A JAMM motif motif is present at residues 139 to 152; it reads HSHPGYGCWLSGID. Positions 347-368 are disordered; the sequence is TEPEKAGPSPSAPEPAVEMADA.

The protein belongs to the peptidase M67A family. CSN5 subfamily. Component of the CSN complex, probably composed of csn-1, csn-2, csn-3, csn-4, csn-5, csn-6 and csn-7. Within the complex it probably interacts directly with csn-1. Interacts with glh-1 and glh-3. Interacts with lag-1. Interacts with kgb-1. The cofactor is a divalent metal cation.

Its subcellular location is the cytoplasm. The protein resides in the nucleus. Its function is as follows. Probable protease subunit of the COP9 signalosome complex (CSN), a complex involved in various cellular and developmental processes. The CSN complex is an essential regulator of the ubiquitin (Ubl) conjugation pathway by mediating the deneddylation of the cullin subunits of the SCF-type E3 ligase complexes, leading to decrease the Ubl ligase activity of SCF. In the complex, it probably acts as the catalytic center that mediates the cleavage of Nedd8 from cullins. It however has no metalloprotease activity by itself and requires the other subunits of the CSN complex. The CSN complex plays an essential role in embryogenesis and oogenesis and is required to regulate microtubule stability in the early embryo. Mediates mei-3/katanin targeting for degradation at the meiosis to mitosis transition via deneddylation of cul-3. May stabilize glh-1 protein levels by antagonizing kgb-1. The protein is COP9 signalosome complex subunit 5 (csn-5) of Caenorhabditis elegans.